Reading from the N-terminus, the 764-residue chain is Hemocyte protein-glutamine gamma-glutamyltransferase (764 aa).

Catalysis depends on residues cysteine 343, histidine 402, and aspartate 425. Ca(2+) is bound by residues asparagine 465, aspartate 467, glutamate 522, and glutamate 527.

The protein belongs to the transglutaminase superfamily. Transglutaminase family. It depends on Ca(2+) as a cofactor. In terms of tissue distribution, mainly expressed in hemocytes, hepatopancreas, and gastric tissues. On the other hand nothing was detected in the heart, intestine and muscle.

The protein resides in the membrane. It carries out the reaction L-glutaminyl-[protein] + L-lysyl-[protein] = [protein]-L-lysyl-N(6)-5-L-glutamyl-[protein] + NH4(+). Functionally, catalyzes the cross-linking of proteins and the conjugation of polyamines to proteins. The sequence is that of Hemocyte protein-glutamine gamma-glutamyltransferase from Tachypleus tridentatus (Japanese horseshoe crab).